The following is a 392-amino-acid chain: Tryptophan 2,3-dioxygenase (392 aa).

Residues 57-61 and Arg128 each bind substrate; that span reads FIVTH. Residue His313 participates in heme binding. Thr328 is a binding site for substrate.

It belongs to the tryptophan 2,3-dioxygenase family. As to quaternary structure, homotetramer. Dimer of dimers. The cofactor is heme.

The enzyme catalyses L-tryptophan + O2 = N-formyl-L-kynurenine. It participates in amino-acid degradation; L-tryptophan degradation via kynurenine pathway; L-kynurenine from L-tryptophan: step 1/2. It functions in the pathway pigment biosynthesis; ommochrome biosynthesis. Functionally, heme-dependent dioxygenase that catalyzes the oxidative cleavage of the L-tryptophan (L-Trp) pyrrole ring and converts L-tryptophan to N-formyl-L-kynurenine. Catalyzes the oxidative cleavage of the indole moiety. The polypeptide is Tryptophan 2,3-dioxygenase (Anopheles gambiae (African malaria mosquito)).